The sequence spans 302 residues: Probable 2-(5''-triphosphoribosyl)-3'-dephosphocoenzyme-A synthase (302 aa).

Belongs to the CitG/MdcB family.

It carries out the reaction 3'-dephospho-CoA + ATP = 2'-(5''-triphospho-alpha-D-ribosyl)-3'-dephospho-CoA + adenine. This is Probable 2-(5''-triphosphoribosyl)-3'-dephosphocoenzyme-A synthase from Citrobacter koseri (strain ATCC BAA-895 / CDC 4225-83 / SGSC4696).